The primary structure comprises 211 residues: Transcription antitermination protein NusB (211 aa).

The disordered stretch occupies residues 152–211 (PAKKERVANPFPSTPPKKPENVPNPFSTPFKKNSSEPIRNPFEGNKSPQPPQKTLRRKKK). Over residues 175 to 188 (NPFSTPFKKNSSEP) the composition is skewed to polar residues.

It belongs to the NusB family.

Functionally, involved in transcription antitermination. Required for transcription of ribosomal RNA (rRNA) genes. Binds specifically to the boxA antiterminator sequence of the ribosomal RNA (rrn) operons. This chain is Transcription antitermination protein NusB, found in Chloroherpeton thalassium (strain ATCC 35110 / GB-78).